The chain runs to 118 residues: UPF0342 protein BPUM_0928 (118 aa).

This sequence belongs to the UPF0342 family.

The sequence is that of UPF0342 protein BPUM_0928 from Bacillus pumilus (strain SAFR-032).